We begin with the raw amino-acid sequence, 480 residues long: MAPHSADTAGLVPSDELRLRTSNSKGPEQEQTLKKYTLEDVSRHNTPADCWLVIWGKVYDVTSWIPNHPGGSLIHVKAGQDSTQLFDSYHPLYVRKMLAKYCIGELVPSAGDDKFKKATLEYADAENEDFYLVVKQRVESYFKSNKINPQIHPHMILKSLFILGGYFASYYLAFFWSSSVLVSLFFALWMGFFAAEVGVSIQHDGNHGSYTKWRGFGYIMGASLDLVGASSFMWRQQHVVGHHSFTNVDNYDPDIRVKDPDVRRVATTQPRQWYHAYQHIYLAVLYGTLALKSIFLDDFLAYFTGSIGPVKVAKMTPLEFNIFFQGKLLYAFYMFVLPSVYGVHSGGTFLALYVASQLITGWMLAFLFQVAHVVDDVAFPTPEGGKVKGGWAAMQVATTTDFSPRSWFWGHVSGGLNNQIEHHLFPGVCHVHYPAIQPIVEKTCKEFDVPYVAYPTFWTALRAHFAHLKKVGLTEFRLDG.

The disordered stretch occupies residues 1–30 (MAPHSADTAGLVPSDELRLRTSNSKGPEQE). The Cytochrome b5 heme-binding domain occupies 33-107 (LKKYTLEDVS…LAKYCIGELV (75 aa)). Residues His68 and His90 each contribute to the heme site. 2 helical membrane passes run 151–171 (IHPHMILKSLFILGGYFASYY) and 173–193 (AFFWSSSVLVSLFFALWMGFF). The short motif at 203-207 (HDGNH) is the Histidine box-1 element. A Histidine box-2 motif is present at residues 238-243 (HVVGHH). 3 helical membrane-spanning segments follow: residues 280–300 (IYLAVLYGTLALKSIFLDDFL), 322–342 (IFFQGKLLYAFYMFVLPSVYG), and 348–368 (TFLALYVASQLITGWMLAFLF). The Histidine box-3 signature appears at 419 to 423 (QIEHH).

Belongs to the fatty acid desaturase type 1 family. Requires Fe(2+) as cofactor.

Its subcellular location is the membrane. It carries out the reaction an (8Z,11Z,14Z)-icosatrienoyl-containing glycerolipid + 2 Fe(II)-[cytochrome b5] + O2 + 2 H(+) = (5Z,8Z,11Z,14Z)-eicosatetraenoyl-containing glycerolipid + 2 Fe(III)-[cytochrome b5] + 2 H2O. The enzyme catalyses an (8Z,11Z,14Z,17Z)-eicosatetraenoyl-containing glycerolipid + 2 Fe(II)-[cytochrome b5] + O2 + 2 H(+) = a (5Z,8Z,11Z,14Z,17Z)-eicosapentaenoyl-containing glycerolipid + 2 Fe(III)-[cytochrome b5] + 2 H2O. Its function is as follows. Fatty acid desaturase that introduces a cis double bond at the 5-position in 20-carbon polyunsaturated fatty acids incorporated in a glycerolipid that contain a Delta(8) double bond. This chain is Acyl-lipid (8-3)-desaturase, found in Physcomitrium patens (Spreading-leaved earth moss).